The sequence spans 121 residues: Large ribosomal subunit protein bL17 (121 aa).

It belongs to the bacterial ribosomal protein bL17 family. As to quaternary structure, part of the 50S ribosomal subunit. Contacts protein L32.

The chain is Large ribosomal subunit protein bL17 from Metamycoplasma arthritidis (strain 158L3-1) (Mycoplasma arthritidis).